The sequence spans 38 residues: Spheniscin-2 (38 aa).

3 disulfide bridges follow: cysteine 5–cysteine 33, cysteine 12–cysteine 27, and cysteine 17–cysteine 34.

As to quaternary structure, monomer. As to expression, secreted into the stomach cavity.

The protein localises to the secreted. Functionally, has antifungal activity and antibacterial activity against Gram-positive and Gram-negative bacteria. Involved in the process of food preservation in the stomach during the incubation fast. May also be present during infection. The sequence is that of Spheniscin-2 from Aptenodytes patagonicus (King penguin).